The sequence spans 113 residues: Dolichyl-diphosphooligosaccharide--protein glycosyltransferase subunit DAD1 (113 aa).

Position 2 is an N-acetylserine (Ser-2). Over Ser-2–Tyr-30 the chain is Cytoplasmic. A helical transmembrane segment spans residues Leu-31–Phe-51. Position 52 (Pro-52) is a topological domain, lumenal. The chain crosses the membrane as a helical span at residues Phe-53–Leu-73. Residues Arg-74–Arg-92 lie on the Cytoplasmic side of the membrane. Residues Ala-93–Gly-113 traverse the membrane as a helical segment.

The protein belongs to the DAD/OST2 family. In terms of assembly, component of the oligosaccharyltransferase (OST) complex. OST exists in two different complex forms which contain common core subunits RPN1, RPN2, OST48, OST4, DAD1 and TMEM258, either STT3A or STT3B as catalytic subunits, and form-specific accessory subunits. STT3A complex assembly occurs through the formation of 3 subcomplexes. Subcomplex 1 contains RPN1 and TMEM258, subcomplex 2 contains the STT3A-specific subunits STT3A, DC2/OSTC, and KCP2 as well as the core subunit OST4, and subcomplex 3 contains RPN2, DAD1, and OST48. The STT3A complex can form stable complexes with the Sec61 complex or with both the Sec61 and TRAP complexes.

The protein resides in the endoplasmic reticulum membrane. Its pathway is protein modification; protein glycosylation. Subunit of the oligosaccharyl transferase (OST) complex that catalyzes the initial transfer of a defined glycan (Glc(3)Man(9)GlcNAc(2) in eukaryotes) from the lipid carrier dolichol-pyrophosphate to an asparagine residue within an Asn-X-Ser/Thr consensus motif in nascent polypeptide chains, the first step in protein N-glycosylation. N-glycosylation occurs cotranslationally and the complex associates with the Sec61 complex at the channel-forming translocon complex that mediates protein translocation across the endoplasmic reticulum (ER). All subunits are required for a maximal enzyme activity. The protein is Dolichyl-diphosphooligosaccharide--protein glycosyltransferase subunit DAD1 of Mus musculus (Mouse).